The primary structure comprises 412 residues: Yellow-related salivary protein LJM17 (412 aa).

The first 18 residues, 1–18 (MRFFFVFLAIVLFQGIHG), serve as a signal peptide directing secretion. An N-linked (GlcNAc...) asparagine glycan is attached at asparagine 29.

The protein belongs to the major royal jelly protein family. As to expression, salivary gland.

The protein localises to the secreted. Its function is as follows. Probably modulates blood feeding of sand flies on vertebrate species by binding and sequestering different mediators involved in the host response. Binds biogenic amines. Binds serotonin with high affinity. Binds noradrenaline but not adrenaline. Binds dopamine and octopamine. Binds histamine. Inhibits host smooth muscle contraction induced by histamine in bioassay with guinea pig ileum. Immunogenic; elicits antibody production in the host. Functions as a chemoattractant for host neutrophils; likely acts through a G-protein-coupled receptor and effect is dependent on calcium influx. The chain is Yellow-related salivary protein LJM17 from Lutzomyia longipalpis (Sand fly).